The sequence spans 283 residues: DegV domain-containing protein CPE0304 (283 aa).

The 279-residue stretch at 3-281 (VKVITDSTSC…VKSVGIAYAR (279 aa)) folds into the DegV domain. Positions 60 and 92 each coordinate hexadecanoate.

In terms of biological role, may bind long-chain fatty acids, such as palmitate, and may play a role in lipid transport or fatty acid metabolism. In Clostridium perfringens (strain 13 / Type A), this protein is DegV domain-containing protein CPE0304.